The sequence spans 177 residues: ATP synthase subunit delta (177 aa).

The protein belongs to the ATPase delta chain family. F-type ATPases have 2 components, F(1) - the catalytic core - and F(0) - the membrane proton channel. F(1) has five subunits: alpha(3), beta(3), gamma(1), delta(1), epsilon(1). F(0) has three main subunits: a(1), b(2) and c(10-14). The alpha and beta chains form an alternating ring which encloses part of the gamma chain. F(1) is attached to F(0) by a central stalk formed by the gamma and epsilon chains, while a peripheral stalk is formed by the delta and b chains.

Its subcellular location is the cell inner membrane. Its function is as follows. F(1)F(0) ATP synthase produces ATP from ADP in the presence of a proton or sodium gradient. F-type ATPases consist of two structural domains, F(1) containing the extramembraneous catalytic core and F(0) containing the membrane proton channel, linked together by a central stalk and a peripheral stalk. During catalysis, ATP synthesis in the catalytic domain of F(1) is coupled via a rotary mechanism of the central stalk subunits to proton translocation. Functionally, this protein is part of the stalk that links CF(0) to CF(1). It either transmits conformational changes from CF(0) to CF(1) or is implicated in proton conduction. The chain is ATP synthase subunit delta from Actinobacillus pleuropneumoniae serotype 7 (strain AP76).